We begin with the raw amino-acid sequence, 364 residues long: GMP reductase (364 aa).

Residues 26–27 (SR), Lys-78, 132–134 (DVA), and 183–184 (IG) each bind NADP(+). Gly-184, Gly-186, and Cys-189 together coordinate K(+). The Thioimidate intermediate role is filled by Cys-189. Thr-191 (proton donor/acceptor) is an active-site residue. Arg-192 provides a ligand contact to K(+). GMP-binding positions include 222-224 (DGG), 245-246 (GG), 271-273 (GMS), and 289-293 (RASEG). NADP(+)-binding positions include Met-272, 288–289 (YR), and 317–320 (SACT).

This sequence belongs to the IMPDH/GMPR family. GuaC type 1 subfamily. Homotetramer.

The enzyme catalyses IMP + NH4(+) + NADP(+) = GMP + NADPH + 2 H(+). Functionally, catalyzes the irreversible NADPH-dependent deamination of GMP to IMP. It functions in the conversion of nucleobase, nucleoside and nucleotide derivatives of G to A nucleotides, and in maintaining the intracellular balance of A and G nucleotides. The polypeptide is GMP reductase (gmr-1) (Onchocerca volvulus).